The sequence spans 483 residues: UDP-N-acetylmuramoyl-L-alanyl-D-glutamate--L-lysine ligase (483 aa).

S44 is a UDP-N-acetyl-alpha-D-muramoyl-L-alanyl-D-glutamate binding site. 120-126 (GTKGKTT) provides a ligand contact to ATP. UDP-N-acetyl-alpha-D-muramoyl-L-alanyl-D-glutamate contacts are provided by residues 162–163 (TT), S189, and R197. An N6-carboxylysine modification is found at K231. The short motif at 406–409 (DDPN) is the L-lysine recognition motif element.

This sequence belongs to the MurCDEF family. MurE subfamily. In terms of processing, carboxylation is probably crucial for Mg(2+) binding and, consequently, for the gamma-phosphate positioning of ATP.

It localises to the cytoplasm. It catalyses the reaction UDP-N-acetyl-alpha-D-muramoyl-L-alanyl-D-glutamate + L-lysine + ATP = UDP-N-acetyl-alpha-D-muramoyl-L-alanyl-gamma-D-glutamyl-L-lysine + ADP + phosphate + H(+). It functions in the pathway cell wall biogenesis; peptidoglycan biosynthesis. Its function is as follows. Catalyzes the addition of L-lysine to the nucleotide precursor UDP-N-acetylmuramoyl-L-alanyl-D-glutamate (UMAG) in the biosynthesis of bacterial cell-wall peptidoglycan. The chain is UDP-N-acetylmuramoyl-L-alanyl-D-glutamate--L-lysine ligase from Streptococcus mutans serotype c (strain ATCC 700610 / UA159).